The primary structure comprises 431 residues: Adenylosuccinate synthetase (431 aa).

GTP-binding positions include 13-19 (GDEGKGK) and 41-43 (GHT). Aspartate 14 acts as the Proton acceptor in catalysis. Residues aspartate 14 and glycine 41 each contribute to the Mg(2+) site. IMP is bound by residues 14–17 (DEGK), 39–42 (NAGH), threonine 130, arginine 144, glutamine 225, threonine 240, and arginine 304. Histidine 42 serves as the catalytic Proton donor. Substrate is bound at residue 300 to 306 (ATTGRKR). GTP is bound by residues arginine 306, 332-334 (KLD), and 415-417 (STG).

This sequence belongs to the adenylosuccinate synthetase family. In terms of assembly, homodimer. Mg(2+) serves as cofactor.

Its subcellular location is the cytoplasm. It carries out the reaction IMP + L-aspartate + GTP = N(6)-(1,2-dicarboxyethyl)-AMP + GDP + phosphate + 2 H(+). The protein operates within purine metabolism; AMP biosynthesis via de novo pathway; AMP from IMP: step 1/2. Its function is as follows. Plays an important role in the de novo pathway of purine nucleotide biosynthesis. Catalyzes the first committed step in the biosynthesis of AMP from IMP. The chain is Adenylosuccinate synthetase from Shewanella oneidensis (strain ATCC 700550 / JCM 31522 / CIP 106686 / LMG 19005 / NCIMB 14063 / MR-1).